Reading from the N-terminus, the 845-residue chain is Translation initiation factor IF-2 (845 aa).

2 disordered regions span residues arginine 45–serine 91 and glutamate 127–valine 209. Over residues serine 81–serine 91 the composition is skewed to polar residues. The segment covering threonine 137–asparagine 149 has biased composition (basic and acidic residues). Positions proline 151–serine 162 are enriched in polar residues. Basic and acidic residues predominate over residues threonine 179–histidine 193. The tr-type G domain maps to proline 343–lysine 512. The interval glycine 352 to threonine 359 is G1. Glycine 352 to threonine 359 contributes to the GTP binding site. The G2 stretch occupies residues glycine 377–histidine 381. Positions aspartate 398 to glycine 401 are G3. GTP contacts are provided by residues aspartate 398–histidine 402 and asparagine 452–aspartate 455. Positions asparagine 452–aspartate 455 are G4. The interval serine 488–lysine 490 is G5.

It belongs to the TRAFAC class translation factor GTPase superfamily. Classic translation factor GTPase family. IF-2 subfamily.

Its subcellular location is the cytoplasm. In terms of biological role, one of the essential components for the initiation of protein synthesis. Protects formylmethionyl-tRNA from spontaneous hydrolysis and promotes its binding to the 30S ribosomal subunits. Also involved in the hydrolysis of GTP during the formation of the 70S ribosomal complex. This Bartonella quintana (strain Toulouse) (Rochalimaea quintana) protein is Translation initiation factor IF-2.